Consider the following 218-residue polypeptide: Albicidin resistance protein (218 aa).

The protein resides in the periplasm. Its function is as follows. Albicidin resistance protein binds to form a complex without antibiotic activity but without catalyzing any further chemical modifications to albicidin. The protein is Albicidin resistance protein of Klebsiella oxytoca.